Reading from the N-terminus, the 1258-residue chain is Splicing factor, arginine/serine-rich 19 (1258 aa).

6 disordered regions span residues 1 to 32, 159 to 345, 370 to 398, 410 to 1034, 1114 to 1154, and 1223 to 1258; these read MEEE…LSPS, KTVS…PRRR, GGPA…EEEP, PRQP…PPPM, GSLP…DKYL, and FRKH…LPPL. Residues 7–27 are compositionally biased toward basic and acidic residues; it reads SRGKTEESGEDRGDGPPDRDP. The segment covering 193-207 has biased composition (low complexity); that stretch reads SSASSSPSPSPSSSS. Pro residues predominate over residues 208–223; the sequence is PSPPPPPPPPPPPALP. Residues 228–237 show a composition bias toward basic and acidic residues; the sequence is DIYDPFHPTD. Residue S241 is modified to Phosphoserine. The segment covering 256–266 has biased composition (polar residues); sequence TGSNPSSSAGT. The segment covering 269-283 has biased composition (acidic residues); it reads PEEEEEEEEEEEEEG. The residue at position 329 (T329) is a Phosphothreonine. The segment covering 374–383 has biased composition (pro residues); sequence LPLPPLPPTD. A compositionally biased stretch (acidic residues) spans 384–395; that stretch reads PEIEEGEIVQPE. A compositionally biased stretch (low complexity) spans 414-426; it reads PASVATLASVAAP. Phosphoserine occurs at positions 444 and 449. Over residues 480–491 the composition is skewed to basic residues; the sequence is KILTQRRERYRQ. Phosphoserine occurs at positions 493, 495, 512, and 520. 2 stretches are compositionally biased toward basic residues: residues 540 to 555 and 562 to 579; these read TARR…RSRS and RGSH…RRRS. Residues S579 and S581 each carry the phosphoserine modification. The segment covering 594-613 has biased composition (basic residues); the sequence is RERHRGKRREGGKKKKKRSR. The segment covering 614-625 has biased composition (basic and acidic residues); the sequence is SRAEKRSGDLEK. T665 carries the phosphothreonine modification. Phosphoserine is present on residues S678 and S684. The residue at position 691 (Y691) is a Phosphotyrosine. Phosphoserine occurs at positions 693 and 697. 2 stretches are compositionally biased toward basic and acidic residues: residues 698–711 and 721–743; these read ADER…DRRR and SREK…DRSS. Composition is skewed to low complexity over residues 752–777 and 795–806; these read SAPG…SCSS and SSTTPAKDSSSS. Residue K814 forms a Glycyl lysine isopeptide (Lys-Gly) (interchain with G-Cter in SUMO2) linkage. Residues 815–833 show a composition bias toward basic and acidic residues; that stretch reads FSRDRESRSPFLKPDERAP. Phosphoserine occurs at positions 821 and 823. Basic residues predominate over residues 845-877; the sequence is KPKKTKAKAKAGAKKAKGTKGKTKPSKTRKKVR. Phosphoserine is present on residues S878, S885, S912, and S914. A compositionally biased stretch (pro residues) spans 924 to 937; that stretch reads STPPPKVAPPPPAL. Phosphothreonine occurs at positions 925 and 938. The segment covering 940 to 949 has biased composition (polar residues); sequence DSQTVDSSCK. S941 carries the phosphoserine modification. T950 carries the phosphothreonine modification. A compositionally biased stretch (acidic residues) spans 971 to 986; the sequence is EEEEEEEEEEEEEEEQ. Over residues 987-1019 the composition is skewed to low complexity; that stretch reads QPATTTATSTAAAAPSTAPSAGSTAGDSGAEDG. The interval 1133-1258 is necessary for interaction with the CTD domain of POLR2A; that stretch reads PASDKREGSS…GGPGLPLPPL (126 aa). The span at 1135 to 1154 shows a compositional bias: basic and acidic residues; sequence SDKREGSSSSEGRGDTDKYL. A compositionally biased stretch (pro residues) spans 1246-1258; it reads PDKGGPGLPLPPL.

This sequence belongs to the splicing factor SR family. Interacts with POLR2A.

It is found in the nucleus. In terms of biological role, may function in pre-mRNA splicing. The sequence is that of Splicing factor, arginine/serine-rich 19 (Scaf1) from Rattus norvegicus (Rat).